Here is a 1091-residue protein sequence, read N- to C-terminus: ATP-citrate synthase (1091 aa).

The ATP-grasp domain maps to 4-265 (KAISEQTGKE…LDAKSGASLK (262 aa)). 6 residues coordinate ATP: Lys-58, Arg-66, Gly-67, Pro-109, Val-111, and Glu-118. Tyr-131 carries the post-translational modification Phosphotyrosine. Asp-216 lines the ATP pocket. Asp-257, Ser-260, and Ala-262 together coordinate Mg(2+). At Ser-263 the chain carries Phosphoserine. Residues Gly-309, Asn-346, Thr-348, Tyr-364, and Arg-379 each contribute to the citrate site. The span at 442-457 (SGSTSTPAPSRTASFS) shows a compositional bias: low complexity. The interval 442 to 478 (SGSTSTPAPSRTASFSESRADEVAPAKKAKPAMPQGK) is disordered. Thr-447 carries the phosphothreonine modification. Ser-451 is subject to Phosphoserine. A Phosphoserine; by PKA and PKB/AKT1 or PKB/AKT2 or BCKDK modification is found at Ser-455. Ser-459 is modified (phosphoserine). N6-acetyllysine; alternate occurs at positions 530, 536, and 544. Glycyl lysine isopeptide (Lys-Gly) (interchain with G-Cter in ubiquitin); alternate cross-links involve residues Lys-530, Lys-536, and Lys-544. Thr-629 carries the post-translational modification Phosphothreonine. Ser-653 carries the post-translational modification Phosphoserine. Tyr-672 carries the phosphotyrosine modification. The active-site Tele-phosphohistidine intermediate is the His-750. 769–779 (LKEAGVFVPRS) contributes to the CoA binding site. A Phosphoserine modification is found at Ser-829. N6-acetyllysine occurs at positions 938, 958, 968, and 1067. Ser-1090 is modified (phosphoserine).

It in the N-terminal section; belongs to the succinate/malate CoA ligase beta subunit family. The protein in the C-terminal section; belongs to the succinate/malate CoA ligase alpha subunit family. In terms of assembly, homotetramer. The cofactor is Mg(2+). Post-translationally, phosphorylated by PKA and GSK3 in a sequential manner; phosphorylation results in activation of its activity. Phosphorylation on Thr-447 and Ser-451 depends on the phosphorylation state of Ser-455. Phosphorylation on Ser-455 is decreased by prior phosphorylation on the other 2 residues. Phosphorylated at Ser-455 by BCKDK and dephosphorylated by protein phosphatase PPM1K. ISGylated. In terms of processing, acetylated at Lys-530, Lys-536 and Lys-544 by KAT2B/PCAF. Acetylation is promoted by glucose and stabilizes the protein, probably by preventing ubiquitination at the same sites. Acetylation promotes de novo lipid synthesis. Deacetylated by SIRT2. Post-translationally, ubiquitinated at Lys-530, Lys-536 and Lys-544 by the BCR(KLHL25) E3 ubiquitin ligase complex and UBR4, leading to its degradation. Ubiquitination is probably inhibited by acetylation at same site. BCR(KLHL25)-mediated degradation of ACLY promotes fatty acid oxidation and is required for differentiation of inducible regulatory T (iTreg) cells.

It is found in the cytoplasm. The protein resides in the cytosol. The catalysed reaction is oxaloacetate + acetyl-CoA + ADP + phosphate = citrate + ATP + CoA. With respect to regulation, phosphorylation results in activation of its activity. Glucose 6-phosphate, fructose 6-phosphate, fructose 2,6-bisphosphate, ribulose 5-phosphate, and fructose 1,6-bisphosphate also act as activators. In terms of biological role, catalyzes the cleavage of citrate into oxaloacetate and acetyl-CoA, the latter serving as common substrate in multiple biochemical reactions in protein, carbohydrate and lipid metabolism. In Mus musculus (Mouse), this protein is ATP-citrate synthase (Acly).